Consider the following 1064-residue polypeptide: Lysine-specific demethylase 4A (1064 aa).

An N-acetylalanine modification is found at alanine 2. Residues 14 to 56 form the JmjN domain; the sequence is IMTFYPTMEEFRNFSRYIAYIESQGAHRAGLAKVVPPKEWKPR. Tyrosine 132 contributes to the 2-oxoglutarate binding site. The region spanning 142–308 is the JmjC domain; that stretch reads EKHVDEWNIG…YGKQAVLCSC (167 aa). Residues histidine 188 and glutamate 190 each coordinate Fe cation. 2 residues coordinate 2-oxoglutarate: asparagine 198 and lysine 206. Residues cysteine 234 and histidine 240 each contribute to the Zn(2+) site. Lysine 241 is a binding site for 2-oxoglutarate. Histidine 276 contacts Fe cation. Positions 306 and 308 each coordinate Zn(2+). Disordered regions lie at residues 358-384, 501-537, and 616-642; these read ELPPRAGNEEECPEDDMEGVEDGEEGD, FSGSKKKSSSSLGSGSSRDSVSSDSETSEPLSCRAQG, and SDDETSEQLTPEEEAEETEAWAKPLSQ. Over residues 366 to 382 the composition is skewed to acidic residues; the sequence is EEECPEDDMEGVEDGEE. The span at 509-532 shows a compositional bias: low complexity; the sequence is SSSLGSGSSRDSVSSDSETSEPLS. Serine 523 carries the post-translational modification Phosphoserine. Residues 597 to 638 form an interaction with NCOR1 region; sequence RQPLSKLPRHHPLVLQECVSDDETSEQLTPEEEAEETEAWAK. Acidic residues predominate over residues 616–634; it reads SDDETSEQLTPEEEAEETE. The PHD-type 1 zinc-finger motif lies at 709–767; sequence MCFTSTGCGTDINLSTPYLEEDGTSILVSCKKCSVRVHASCYGVPPAKASEDWMCSRCS. The segment at 772 to 805 adopts a C2HC pre-PHD-type zinc-finger fold; the sequence is EEDCCLCSLRGGALQRANDDRWVHVSCAVAILEA. The segment at 828–885 adopts a PHD-type 2 zinc-finger fold; the sequence is LKCIFCKKRRKRTAGCCVQCSHGRCPTAFHVSCAQAAGVMMQPDDWPFVVFITCFRHK. 2 consecutive Tudor domains span residues 897–954 and 955–1011; these read QSIT…CLQF and GPPA…EELP.

The protein belongs to the JHDM3 histone demethylase family. As to quaternary structure, interacts with histone deacetylase proteins HDAC1, HDAC2 and HDAC3. Interacts with RB and NCOR1. Interacts with VRK1. The cofactor is Fe(2+). Ubiquitinated by RNF8 and RNF168, leading to its degradation. Degradation promotes accessibility of H4K20me2 mark for DNA repair protein TP53BP1, which is then recruited. Also ubiquitinated by the SCF(FBXO22) complex; leading to proteasomal degradation.

The protein resides in the nucleus. It carries out the reaction N(6),N(6),N(6)-trimethyl-L-lysyl(9)-[histone H3] + 2 2-oxoglutarate + 2 O2 = N(6)-methyl-L-lysyl(9)-[histone H3] + 2 formaldehyde + 2 succinate + 2 CO2. It catalyses the reaction N(6),N(6),N(6)-trimethyl-L-lysyl(36)-[histone H3] + 2 2-oxoglutarate + 2 O2 = N(6)-methyl-L-lysyl(36)-[histone H3] + 2 formaldehyde + 2 succinate + 2 CO2. Histone demethylase that specifically demethylates 'Lys-9' and 'Lys-36' residues of histone H3, thereby playing a central role in histone code. Does not demethylate histone H3 'Lys-4', H3 'Lys-27' nor H4 'Lys-20'. Demethylates trimethylated H3 'Lys-9' and H3 'Lys-36' residue, while it has no activity on mono- and dimethylated residues. Demethylation of Lys residue generates formaldehyde and succinate. Participates in transcriptional repression of ASCL2 and E2F-responsive promoters via the recruitment of histone deacetylases and NCOR1, respectively. The chain is Lysine-specific demethylase 4A (KDM4A) from Pongo abelii (Sumatran orangutan).